Here is a 214-residue protein sequence, read N- to C-terminus: Small ribosomal subunit protein uS5 (214 aa).

The region spanning Leu54 to Val117 is the S5 DRBM domain.

It belongs to the universal ribosomal protein uS5 family. Part of the 30S ribosomal subunit. Contacts protein S4.

Functionally, with S4 and S12 plays an important role in translational accuracy. In Saccharolobus islandicus (strain Y.N.15.51 / Yellowstone #2) (Sulfolobus islandicus), this protein is Small ribosomal subunit protein uS5.